Reading from the N-terminus, the 200-residue chain is Transcription elongation factor A protein-like 5 (200 aa).

Basic and acidic residues-rich tracts occupy residues 1-49 (MEKF…KLEV), 61-85 (GEGKPEKQGKSDGEGKRQGESKPDS), 94-106 (RAAEKRPAEDYVP), 114-153 (DRGTDDSPKNSQEDLQDRHVSSEEMMRECADMTRAQEELR), and 190-200 (GQKDLEDAPFV). A disordered region spans residues 1-200 (MEKFYKENEG…QKDLEDAPFV (200 aa)).

Belongs to the TFS-II family. TFA subfamily.

It localises to the nucleus. Its function is as follows. May be involved in transcriptional regulation. The sequence is that of Transcription elongation factor A protein-like 5 (Tceal5) from Mus musculus (Mouse).